A 251-amino-acid polypeptide reads, in one-letter code: ATP synthase delta chain, chloroplastic (251 aa).

Residues 1–64 (MASLQHTTAS…STGGALGARM (64 aa)) constitute a chloroplast transit peptide.

Belongs to the ATPase delta chain family. F-type ATPases have 2 components, CF(1) - the catalytic core - and CF(0) - the membrane proton channel. CF(1) has five subunits: alpha(3), beta(3), gamma(1), delta(1), epsilon(1). CF(0) has three main subunits: a, b and c.

The protein localises to the plastid. It localises to the chloroplast thylakoid membrane. Functionally, this protein seems to be part of the stalk that links CF(0) to CF(1). It either transmits conformational changes from CF(0) into CF(1) or is implicated in proton conduction. The protein is ATP synthase delta chain, chloroplastic (ATPD) of Pisum sativum (Garden pea).